Consider the following 100-residue polypeptide: C-X-C motif chemokine 2 (100 aa).

The N-terminal stretch at 1-31 is a signal peptide; sequence MAPPTRQLLNAVLVLLLLLATNHQGTGVVVA. Disulfide bonds link cysteine 36–cysteine 62 and cysteine 38–cysteine 78.

The protein belongs to the intercrine alpha (chemokine CxC) family. As to quaternary structure, homotetramer. At least expressed in the lung and trachea.

It is found in the secreted. Its function is as follows. Chemotactic for human polymorphonuclear leukocytes but does not induce chemokinesis or an oxidative burst. Contributes to neutrophil activation during inflammation. The sequence is that of C-X-C motif chemokine 2 (Cxcl2) from Rattus norvegicus (Rat).